Reading from the N-terminus, the 165-residue chain is Ribosome maturation factor RimM (165 aa).

A PRC barrel domain is found at 94–165 (EDEFYIADLN…YVILNYQTKV (72 aa)).

The protein belongs to the RimM family. As to quaternary structure, binds ribosomal protein uS19.

It localises to the cytoplasm. An accessory protein needed during the final step in the assembly of 30S ribosomal subunit, possibly for assembly of the head region. Essential for efficient processing of 16S rRNA. May be needed both before and after RbfA during the maturation of 16S rRNA. It has affinity for free ribosomal 30S subunits but not for 70S ribosomes. This is Ribosome maturation factor RimM from Rickettsia prowazekii (strain Madrid E).